Reading from the N-terminus, the 367-residue chain is Aurora kinase (367 aa).

Polar residues-rich tracts occupy residues 1–29 (MQRN…TSRI) and 37–48 (HSPQQRNPNSKI). Residues 1 to 52 (MQRNSLVNIKLNANSPSKKTTTRPNTSRINKPWRISHSPQQRNPNSKIPSPV) form a disordered region. At serine 5 the chain carries Phosphoserine; by autocatalysis. Serine 76 is modified (phosphoserine). The Protein kinase domain occupies 104–355 (FELGKKLGKG…LGDVKMHPWI (252 aa)). Residues 110–118 (LGKGKFGKV) and lysine 133 each bind ATP. Aspartate 227 serves as the catalytic Proton acceptor. Threonine 260 is modified (phosphothreonine; by autocatalysis).

The protein belongs to the protein kinase superfamily. Ser/Thr protein kinase family. Aurora subfamily. In terms of assembly, component of the CPC complex at least composed of IPL1, BIR1 and SLI15.

The protein resides in the nucleus. The protein localises to the cytoplasm. Its subcellular location is the cytoskeleton. It is found in the spindle. It localises to the chromosome. The protein resides in the centromere. The protein localises to the kinetochore. The catalysed reaction is L-seryl-[protein] + ATP = O-phospho-L-seryl-[protein] + ADP + H(+). It catalyses the reaction L-threonyl-[protein] + ATP = O-phospho-L-threonyl-[protein] + ADP + H(+). Functionally, component of the chromosomal passenger complex (CPC), a complex that acts as a key regulator of chromosome segregation and cytokinesis. Has a role in error-correction of aberrent kinetochore-microtubule attachments to ensure that sister kinetochores become bioriented and connect to opposite poles by promoting spindle assembly checkpoint signaling. Acts in opposition to the phosphatase PP1. Not required for kinetochore detachment from microtubules during replication of centromeric DNA. Phosphorylates histone H3 to form H3S10ph during mitosis and meiosis. Phosphorylates CNN1, which contributes to the enrichment of CNN1 on anaphase kinetochores. Phosphorylates RGD1. The protein is Aurora kinase (IPL1) of Saccharomyces cerevisiae (strain ATCC 204508 / S288c) (Baker's yeast).